A 159-amino-acid polypeptide reads, in one-letter code: uncharacterized protein (159 aa).

4 helical membrane passes run 5 to 27, 34 to 51, 61 to 83, and 103 to 125; these read TLDL…RGFV, ASIL…KRLV, SILL…MLFL, and FGFF…LLHV.

Its subcellular location is the cell membrane. This is an uncharacterized protein from Treponema pallidum (strain Nichols).